Here is a 153-residue protein sequence, read N- to C-terminus: Transcriptional repressor NrdR (153 aa).

The segment at 3 to 34 (CPFCNNINTQVKDSRAIEDDILIRRRRICLVC) is a zinc-finger region. The ATP-cone domain maps to 49–139 (FMVIKKNGET…VYMNFKNIND (91 aa)).

Belongs to the NrdR family. It depends on Zn(2+) as a cofactor.

Negatively regulates transcription of bacterial ribonucleotide reductase nrd genes and operons by binding to NrdR-boxes. In Ehrlichia canis (strain Jake), this protein is Transcriptional repressor NrdR.